Consider the following 291-residue polypeptide: MLQEKLTMNRDFLNLINESLLNKYHPAQSRLHEAINYSLSAGGKRIRPLLVLTTLDSLGGNAHDGLPFGIALEMIHTYSLIHDDLPAMDNDDYRRGKLTNHKRFDEATAILAGDALLTDAFQCILNTQLNAEIKLSLINLLSTASGSNGMVYGQMLDMQGEHKTLTLNELERIHIHKTGELIRAAIVSAGIIMNFNDAQIEQLNIIGKNVGLMFQIKDDILDVEGSFENIGKTVGSDLNNDKSTYVSLLGLEASKQLLNDKLTETYDALKTLQPINDNLKTLITYIVERNK.

Residues Lys-44, Arg-47, and His-76 each contribute to the isopentenyl diphosphate site. Asp-83 and Asp-89 together coordinate Mg(2+). Residue Arg-94 participates in (2E)-geranyl diphosphate binding. Arg-95 contributes to the isopentenyl diphosphate binding site. 4 residues coordinate (2E)-geranyl diphosphate: Lys-177, Thr-178, Gln-215, and Lys-232.

The protein belongs to the FPP/GGPP synthase family. Mg(2+) serves as cofactor.

It localises to the cytoplasm. It carries out the reaction isopentenyl diphosphate + (2E)-geranyl diphosphate = (2E,6E)-farnesyl diphosphate + diphosphate. The sequence is that of Farnesyl diphosphate synthase (fps) from Micrococcus luteus (Micrococcus lysodeikticus).